We begin with the raw amino-acid sequence, 94 residues long: Endoribonuclease VapD 2 (94 aa).

It belongs to the VapD ribonuclease family. In terms of assembly, homodimer.

Functionally, cleaves ssRNA, mostly between U:A. This Riemerella anatipestifer (Moraxella anatipestifer) protein is Endoribonuclease VapD 2.